The chain runs to 124 residues: Small ribosomal subunit protein uS13c (124 aa).

The tract at residues 100-124 (GQRTRTNARTRKGKVKTAVAKKKGR) is disordered. Basic residues predominate over residues 101 to 124 (QRTRTNARTRKGKVKTAVAKKKGR).

This sequence belongs to the universal ribosomal protein uS13 family. Part of the 30S ribosomal subunit.

The protein resides in the plastid. It localises to the chloroplast. Its function is as follows. Located at the top of the head of the 30S subunit, it contacts several helices of the 16S rRNA. The polypeptide is Small ribosomal subunit protein uS13c (Emiliania huxleyi (Coccolithophore)).